Here is a 711-residue protein sequence, read N- to C-terminus: Polyribonucleotide nucleotidyltransferase (711 aa).

Residues Asp486 and Asp492 each coordinate Mg(2+). A KH domain is found at 553–612 (PRIHTIKISTDKIKDVIGKGGSVIRALTEETGTTIEIEDDGTVKIAATDGEKAKYAIRRI). One can recognise an S1 motif domain in the interval 622–690 (GRIYNSKVTR…RQGRVRLSIK (69 aa)). The segment at 689–711 (IKEATEQSQPAAAPEAPASEQAE) is disordered. A compositionally biased stretch (low complexity) spans 694 to 711 (EQSQPAAAPEAPASEQAE).

It belongs to the polyribonucleotide nucleotidyltransferase family. As to quaternary structure, component of the RNA degradosome, which is a multiprotein complex involved in RNA processing and mRNA degradation. The cofactor is Mg(2+).

The protein resides in the cytoplasm. It carries out the reaction RNA(n+1) + phosphate = RNA(n) + a ribonucleoside 5'-diphosphate. Involved in mRNA degradation. Catalyzes the phosphorolysis of single-stranded polyribonucleotides processively in the 3'- to 5'-direction. The chain is Polyribonucleotide nucleotidyltransferase from Salmonella typhi.